Here is a 493-residue protein sequence, read N- to C-terminus: Leucine-rich repeat-containing protein 14 (493 aa).

The stretch at 111 to 146 (KHALRVLDMTGLLDDGVEQDPETMSMWDCTAAVART) is one LRR 1; degenerate repeat. An LRR 2; degenerate repeat occupies 194–218 (RLCCRDLRAEDLPMRNTVALLQLLD). One copy of the LRR 3; degenerate repeat lies at 219-246 (AGCLRRIDLRFNNLGLRGLSVIIPHVAR). Residues 247 to 282 (FQHLASLRLHYVHGDSRQPSVDGEDNFRYFLAQMGR) form an LRR 4; degenerate repeat. LRR repeat units follow at residues 283–307 (FMCLRELSMGSSLLSGRLDQLLSTL), 308–339 (QRPLESLELAFCALLPEDLRFLAQSSHAAHLK), 340–360 (KLDLSGNDLSGNQLTPFQGLL), 364–391 (ATTLLHLELTECQLADAQLLATLPTLTR), and 392–416 (CASLRYLGLYGNPLSMAGLKELLRD).

Belongs to the PRAME family. LRRC14 subfamily. As to quaternary structure, interacts with IKBKB; disrupts IKBKB-IKBKG interaction preventing I-kappa-B-kinase (IKK) core complex formation and leading to a decrease of IKBKB phosphorylation and NF-kappaB activation. Interacts with CHUK.

The protein resides in the cytoplasm. In terms of biological role, negatively regulates Toll-like receptor-mediated NF-kappa-B signaling by disrupting IKK core complex formation through interaction with IKBKB. This Mus musculus (Mouse) protein is Leucine-rich repeat-containing protein 14.